Consider the following 123-residue polypeptide: Probable U6 snRNA-associated Sm-like protein LSm4 (123 aa).

One can recognise a Sm domain in the interval 3 to 76 (LPLSLLKTAQ…IKYLRIPETV (74 aa)). Positions 85–97 (NEVRRQQQREQSR) are enriched in basic and acidic residues. Residues 85–123 (NEVRRQQQREQSRGRGGGRGGRGGHRGGGGNRGGRGGAR) are disordered. A compositionally biased stretch (gly residues) spans 98–123 (GRGGGRGGRGGHRGGGGNRGGRGGAR).

Belongs to the snRNP Sm proteins family. As to quaternary structure, component of the precatalytic spliceosome (spliceosome B complex). Component of the U4/U6-U5 tri-snRNP complex, a building block of the precatalytic spliceosome (spliceosome B complex). LSM2, LSM3, LSM4, LSM5, LSM6, LSM7 and LSM8 form a heptameric, ring-shaped subcomplex (the LSM2-8 complex) that is part of the U4/U6-U5 tri-snRNP complex and the precatalytic spliceosome.

The protein localises to the nucleus. In terms of biological role, plays a role in pre-mRNA splicing as component of the U4/U6-U5 tri-snRNP complex that is involved in spliceosome assembly, and as component of the precatalytic spliceosome (spliceosome B complex). The heptameric LSM2-8 complex binds specifically to the 3'-terminal U-tract of U6 snRNA. The sequence is that of Probable U6 snRNA-associated Sm-like protein LSm4 (lsm-4) from Caenorhabditis elegans.